Here is a 134-residue protein sequence, read N- to C-terminus: ATP synthase epsilon chain (134 aa).

It belongs to the ATPase epsilon chain family. As to quaternary structure, F-type ATPases have 2 components, CF(1) - the catalytic core - and CF(0) - the membrane proton channel. CF(1) has five subunits: alpha(3), beta(3), gamma(1), delta(1), epsilon(1). CF(0) has three main subunits: a, b and c.

Its subcellular location is the cell membrane. Functionally, produces ATP from ADP in the presence of a proton gradient across the membrane. The sequence is that of ATP synthase epsilon chain from Staphylococcus saprophyticus subsp. saprophyticus (strain ATCC 15305 / DSM 20229 / NCIMB 8711 / NCTC 7292 / S-41).